The chain runs to 60 residues: Large ribosomal subunit protein uL30 (60 aa).

It belongs to the universal ribosomal protein uL30 family. Part of the 50S ribosomal subunit.

In Aromatoleum aromaticum (strain DSM 19018 / LMG 30748 / EbN1) (Azoarcus sp. (strain EbN1)), this protein is Large ribosomal subunit protein uL30.